Consider the following 187-residue polypeptide: Probable chorismate pyruvate-lyase (187 aa).

Substrate-binding residues include Arg76, Leu114, and Glu173.

It belongs to the UbiC family.

It localises to the cytoplasm. It catalyses the reaction chorismate = 4-hydroxybenzoate + pyruvate. Its pathway is cofactor biosynthesis; ubiquinone biosynthesis. In terms of biological role, removes the pyruvyl group from chorismate, with concomitant aromatization of the ring, to provide 4-hydroxybenzoate (4HB) for the ubiquinone pathway. The protein is Probable chorismate pyruvate-lyase of Shewanella amazonensis (strain ATCC BAA-1098 / SB2B).